Consider the following 501-residue polypeptide: Aspartyl/glutamyl-tRNA(Asn/Gln) amidotransferase subunit B (501 aa).

Residues 276 to 299 are disordered; the sequence is HYQEADGSTSKGRPKETAEDYRYF. Residues 288 to 299 show a composition bias toward basic and acidic residues; sequence RPKETAEDYRYF.

It belongs to the GatB/GatE family. GatB subfamily. In terms of assembly, heterotrimer of A, B and C subunits.

The enzyme catalyses L-glutamyl-tRNA(Gln) + L-glutamine + ATP + H2O = L-glutaminyl-tRNA(Gln) + L-glutamate + ADP + phosphate + H(+). The catalysed reaction is L-aspartyl-tRNA(Asn) + L-glutamine + ATP + H2O = L-asparaginyl-tRNA(Asn) + L-glutamate + ADP + phosphate + 2 H(+). Functionally, allows the formation of correctly charged Asn-tRNA(Asn) or Gln-tRNA(Gln) through the transamidation of misacylated Asp-tRNA(Asn) or Glu-tRNA(Gln) in organisms which lack either or both of asparaginyl-tRNA or glutaminyl-tRNA synthetases. The reaction takes place in the presence of glutamine and ATP through an activated phospho-Asp-tRNA(Asn) or phospho-Glu-tRNA(Gln). The chain is Aspartyl/glutamyl-tRNA(Asn/Gln) amidotransferase subunit B from Corynebacterium glutamicum (strain R).